The chain runs to 185 residues: uncharacterized protein (185 aa).

Transmembrane regions (helical) follow at residues 5 to 25 (SFLISTLFDLYIMVVILRIWL), 63 to 83 (LATVLFAYVLCVLKFVVLILI), 97 to 117 (FLGLLSLIKAAGGLLFWVLLI), and 149 to 169 (IIPAIGGLDLSVLVLFIGLQF).

This sequence belongs to the YggT family.

The protein resides in the cell membrane. This is an uncharacterized protein from Vibrio alginolyticus.